Reading from the N-terminus, the 294-residue chain is MHPRFQTAFAQLADNLQSALAPILADHHFPAMLTAEQVSTLKNTARLDEDALAFALLPLAAACARTDLSHFNVGAIARGVSGNWYFGANMEFLGATMQQTVHAEQSAISHAWLRGEKGLAAVTVNYTPCGHCRQFMNELNSGLDLRIHLPGRAPHTLRDYLPDAFGPKDLEIKTLLMDEQDHGFTLTGDTLTQAAITAANKSHMPYSHSPSGVALECKDGRIFTGSYAENAAFNPTLPPLQGALNLLSLNGYDYADIQRAILAEKGDAALIQWDATAATLKALGCHNIDRVLLG.

2 CMP/dCMP-type deaminase domains span residues 48 to 168 (DEDA…FGPK) and 186 to 294 (LTGD…VLLG). A substrate-binding site is contributed by 89 to 91 (NME). A Zn(2+)-binding site is contributed by H102. E104 acts as the Proton donor in catalysis. 2 residues coordinate Zn(2+): C129 and C132.

It belongs to the cytidine and deoxycytidylate deaminase family. Homodimer. Zn(2+) is required as a cofactor.

The catalysed reaction is cytidine + H2O + H(+) = uridine + NH4(+). It carries out the reaction 2'-deoxycytidine + H2O + H(+) = 2'-deoxyuridine + NH4(+). Functionally, this enzyme scavenges exogenous and endogenous cytidine and 2'-deoxycytidine for UMP synthesis. This is Cytidine deaminase from Salmonella paratyphi A (strain ATCC 9150 / SARB42).